The primary structure comprises 104 residues: Circadian clock oscillator protein KaiB (104 aa).

This sequence belongs to the KaiB family. The KaiABC complex composition changes during the circadian cycle to control KaiC phosphorylation. Complexes KaiC(6), KaiA(2-4):KaiC(6), KaiB(6):KaiC(6) and KaiC(6):KaiB(6):KaiA(12) are among the most important forms, many form cooperatively. Undergoes a major conformational rearrangment; in the free state forms homotetramers as a dimer of dimers. When bound to the CI domain of KaiC switches to a monomeric thioredoxin-fold (KaiB(fs)). KaiB(fs) binds CikA, leading it to dephosphorylate phospho-RpaA.

In terms of biological role, key component of the KaiABC oscillator complex, which constitutes the main circadian regulator in cyanobacteria. Complex composition changes during the circadian cycle to control KaiC phosphorylation. KaiA stimulates KaiC autophosphorylation, while KaiB sequesters KaiA, leading to KaiC autodephosphorylation. Phospho-Ser-431 KaiC accumulation triggers binding of KaiB to form the KaiB(6):KaiC(6) complex, leading to changes in output regulators CikA and SasA. KaiB switches to a thioredoxin-like fold (KaiB(fs)) when bound to KaiC. KaiB(6):KaiC(6) formation exposes a site for KaiA binding that sequesters KaiA from KaiC, making the KaiC(6):KaiB(6):KaiA(12) complex that results in KaiC autodephosphorylation. Functionally, a metamorphic protein which reversibly switches between an inactive tetrameric fold and a rare, thioredoxin-like monomeric fold (KaiB(fs)). KaiB(fs) binds phospho-KaiC, KaiA and CikA. KaiA and CikA compete for binding to KaiB(fs), and KaiB(fs) and SasA compete for binding to KaiC, thus the clock oscillator and output signal pathway are tightly coupled. In Nostoc punctiforme (strain ATCC 29133 / PCC 73102), this protein is Circadian clock oscillator protein KaiB.